The chain runs to 100 residues: UPF0213 protein YhbQ (100 aa).

Residues 2 to 77 (TPWFLYLIRT…KQLTKRQKER (76 aa)) form the GIY-YIG domain.

This sequence belongs to the UPF0213 family.

In Escherichia coli O1:K1 / APEC, this protein is UPF0213 protein YhbQ.